Here is a 462-residue protein sequence, read N- to C-terminus: Proline--tRNA ligase (462 aa).

The protein belongs to the class-II aminoacyl-tRNA synthetase family. ProS type 3 subfamily. As to quaternary structure, homodimer.

The protein localises to the cytoplasm. It carries out the reaction tRNA(Pro) + L-proline + ATP = L-prolyl-tRNA(Pro) + AMP + diphosphate. Its function is as follows. Catalyzes the attachment of proline to tRNA(Pro) in a two-step reaction: proline is first activated by ATP to form Pro-AMP and then transferred to the acceptor end of tRNA(Pro). This chain is Proline--tRNA ligase, found in Thermoplasma volcanium (strain ATCC 51530 / DSM 4299 / JCM 9571 / NBRC 15438 / GSS1).